The chain runs to 452 residues: Protein mab-21-like 4 (452 aa).

The chain is Protein mab-21-like 4 (Mab21l4) from Mus musculus (Mouse).